A 629-amino-acid polypeptide reads, in one-letter code: tRNA uridine 5-carboxymethylaminomethyl modification enzyme MnmG (629 aa).

Gly13–Gly18 is an FAD binding site. Gly273–Phe287 is an NAD(+) binding site.

The protein belongs to the MnmG family. Homodimer. Heterotetramer of two MnmE and two MnmG subunits. It depends on FAD as a cofactor.

The protein localises to the cytoplasm. In terms of biological role, NAD-binding protein involved in the addition of a carboxymethylaminomethyl (cmnm) group at the wobble position (U34) of certain tRNAs, forming tRNA-cmnm(5)s(2)U34. The protein is tRNA uridine 5-carboxymethylaminomethyl modification enzyme MnmG of Aeromonas salmonicida (strain A449).